The primary structure comprises 53 residues: Small, acid-soluble spore protein K (53 aa).

The tract at residues 1 to 53 is disordered; the sequence is MRNKERNFPNQNNNKFEGEPRAKAEYASKRANGTTNTHPQERMHASGKRDDNF. Composition is skewed to basic and acidic residues over residues 16 to 28 and 39 to 53; these read FEGE…EYAS and PQER…DDNF.

The protein belongs to the SspK family.

It is found in the spore core. This Geobacillus sp. (strain WCH70) protein is Small, acid-soluble spore protein K.